The primary structure comprises 82 residues: RNA-binding protein GTNG_0100 (82 aa).

Belongs to the eukaryotic ribosomal protein eL8 family.

The polypeptide is RNA-binding protein GTNG_0100 (Geobacillus thermodenitrificans (strain NG80-2)).